The chain runs to 542 residues: MFS-type efflux pump MMF1 (542 aa).

8 consecutive transmembrane segments (helical) span residues 24-44 (WTIF…MTMI), 51-71 (IVAA…AFLL), 98-118 (VIFL…VLVV), 124-144 (GLGG…LTTL), 151-171 (FGLI…LGGV), 179-199 (WIFW…VLFL), 215-235 (LDLV…IAVT), and 248-268 (VWVP…VEWI). N-linked (GlcNAc...) asparagine glycosylation is present at Asn-285. 6 helical membrane passes run 296–316 (FLHG…FQAI), 326–346 (IWSF…GLLI), 355–375 (LIFI…HWSV), 384–404 (ISQI…LPPI), 419–439 (AYAF…TTIF), and 490–510 (ISDS…STFL).

The protein belongs to the major facilitator superfamily.

The protein localises to the cell membrane. Its function is as follows. Glycosyltransferase; part of the gene cluster that mediates the biosynthesis of mannosylerythritol lipids (MELs), surface-active substances that enhance the availability of water-insoluble substrates. MMF1 is directly involved in the secretiopn of MALs. In Pseudozyma antarctica (strain T-34) (Yeast), this protein is MFS-type efflux pump MMF1.